A 509-amino-acid chain; its full sequence is Putative thymidine phosphorylase (509 aa).

The protein belongs to the thymidine/pyrimidine-nucleoside phosphorylase family. Type 2 subfamily.

The catalysed reaction is thymidine + phosphate = 2-deoxy-alpha-D-ribose 1-phosphate + thymine. The polypeptide is Putative thymidine phosphorylase (Bradyrhizobium sp. (strain ORS 278)).